The sequence spans 498 residues: Cytochrome P450 71D15 (498 aa).

A helical; Signal-anchor for type II membrane protein transmembrane segment spans residues 3–23 (LLQLWSALIILVVTYTISLLI). Cysteine 437 contributes to the heme binding site.

It belongs to the cytochrome P450 family. It depends on heme as a cofactor.

The protein resides in the endoplasmic reticulum membrane. The enzyme catalyses (4S)-limonene + reduced [NADPH--hemoprotein reductase] + O2 = (1S,6R)-isopiperitenol + oxidized [NADPH--hemoprotein reductase] + H2O + H(+). In terms of biological role, hydroxylates (-)-(4S)-limonene to (-)-trans-isopiperitenol, a precursor of (-)-menthol, responsible for the cooling sensation of peppermint. Fluorinated substrate analogs are hydroxylated with the same regio- and stereochemistry. The protein is Cytochrome P450 71D15 (CYP71D15) of Mentha piperita (Peppermint).